The sequence spans 112 residues: CENP-A recruiting complex protein mis19 (112 aa).

Component of the CENP-A recruiting complex composed of at least mis16, mis19, mis19 and mis20.

It is found in the chromosome. The protein localises to the centromere. The protein resides in the kinetochore. Its function is as follows. Component of the CENP-A recruiting complex that ensures the integrity of mitotic spindles through maintenance of kinetochore factors mis6/CENP-I and cnp1/CENP-A. Links mis16 and mis18 to recruit CENP-A through interacting with non-sense-mediated mRNA decay (NMD) factors and the SWI/SNF complex. Also links mis18 with the CCAN/mis6/ctf19 complex to promote CENP-A assembly. This is CENP-A recruiting complex protein mis19 from Schizosaccharomyces pombe (strain 972 / ATCC 24843) (Fission yeast).